Reading from the N-terminus, the 343-residue chain is Glyceraldehyde-3-phosphate dehydrogenase 1 (343 aa).

NAD(+) contacts are provided by residues arginine 13–isoleucine 14, aspartate 35, arginine 79, and serine 121. Residues serine 154–threonine 156, threonine 185, threonine 214–glycine 215, and arginine 237 each bind D-glyceraldehyde 3-phosphate. The active-site Nucleophile is cysteine 155. Position 319 (asparagine 319) interacts with NAD(+).

Belongs to the glyceraldehyde-3-phosphate dehydrogenase family. Homotetramer.

The protein resides in the cytoplasm. It catalyses the reaction D-glyceraldehyde 3-phosphate + phosphate + NAD(+) = (2R)-3-phospho-glyceroyl phosphate + NADH + H(+). It functions in the pathway carbohydrate degradation; glycolysis; pyruvate from D-glyceraldehyde 3-phosphate: step 1/5. Catalyzes the oxidative phosphorylation of glyceraldehyde 3-phosphate (G3P) to 1,3-bisphosphoglycerate (BPG) using the cofactor NAD. The first reaction step involves the formation of a hemiacetal intermediate between G3P and a cysteine residue, and this hemiacetal intermediate is then oxidized to a thioester, with concomitant reduction of NAD to NADH. The reduced NADH is then exchanged with the second NAD, and the thioester is attacked by a nucleophilic inorganic phosphate to produce BPG. In Trichormus variabilis (strain ATCC 29413 / PCC 7937) (Anabaena variabilis), this protein is Glyceraldehyde-3-phosphate dehydrogenase 1 (gap1).